The primary structure comprises 472 residues: Siroheme synthase 1 (472 aa).

A precorrin-2 dehydrogenase /sirohydrochlorin ferrochelatase region spans residues 1–203; it reads MDYLPLFADL…GQLTEAENEL (203 aa). Residues 22–23 and 43–44 each bind NAD(+); these read EV and QT. Position 128 is a phosphoserine (serine 128). The segment at 215-472 is uroporphyrinogen-III C-methyltransferase; that stretch reads GEVALVGAGP…AISPSVVNLA (258 aa). Proline 224 provides a ligand contact to S-adenosyl-L-methionine. The Proton acceptor role is filled by aspartate 247. Lysine 269 functions as the Proton donor in the catalytic mechanism. S-adenosyl-L-methionine contacts are provided by residues 300–302, isoleucine 305, 330–331, methionine 382, and glycine 411; these read GGD and TA.

This sequence in the N-terminal section; belongs to the precorrin-2 dehydrogenase / sirohydrochlorin ferrochelatase family. In the C-terminal section; belongs to the precorrin methyltransferase family.

It catalyses the reaction uroporphyrinogen III + 2 S-adenosyl-L-methionine = precorrin-2 + 2 S-adenosyl-L-homocysteine + H(+). It carries out the reaction precorrin-2 + NAD(+) = sirohydrochlorin + NADH + 2 H(+). The enzyme catalyses siroheme + 2 H(+) = sirohydrochlorin + Fe(2+). It participates in cofactor biosynthesis; adenosylcobalamin biosynthesis; precorrin-2 from uroporphyrinogen III: step 1/1. The protein operates within cofactor biosynthesis; adenosylcobalamin biosynthesis; sirohydrochlorin from precorrin-2: step 1/1. It functions in the pathway porphyrin-containing compound metabolism; siroheme biosynthesis; precorrin-2 from uroporphyrinogen III: step 1/1. Its pathway is porphyrin-containing compound metabolism; siroheme biosynthesis; siroheme from sirohydrochlorin: step 1/1. It participates in porphyrin-containing compound metabolism; siroheme biosynthesis; sirohydrochlorin from precorrin-2: step 1/1. Functionally, multifunctional enzyme that catalyzes the SAM-dependent methylations of uroporphyrinogen III at position C-2 and C-7 to form precorrin-2 via precorrin-1. Then it catalyzes the NAD-dependent ring dehydrogenation of precorrin-2 to yield sirohydrochlorin. Finally, it catalyzes the ferrochelation of sirohydrochlorin to yield siroheme. The chain is Siroheme synthase 1 from Yersinia pestis bv. Antiqua (strain Nepal516).